The primary structure comprises 201 residues: Putative pseudouridine methyltransferase (201 aa).

Met-132 and Cys-186 together coordinate S-adenosyl-L-methionine.

Belongs to the methyltransferase superfamily. TrmY family.

The protein localises to the cytoplasm. This Vibrio cholerae serotype O1 (strain ATCC 39315 / El Tor Inaba N16961) protein is Putative pseudouridine methyltransferase.